A 388-amino-acid polypeptide reads, in one-letter code: Na(+)/H(+) antiporter NhaA (388 aa).

At 1 to 11 (MKHLHRFFSSD) the chain is on the cytoplasmic side. Residues 12–31 (ASGGIILIIAAILAMMMANS) form a helical membrane-spanning segment. Residues 32-58 (GATSGWYHDFLETPVQLRVGSLEINKN) lie on the Periplasmic side of the membrane. The chain crosses the membrane as a helical span at residues 59 to 80 (MLLWINDALMAVFFLLVGLEVK). The Cytoplasmic segment spans residues 81–96 (RELMQGSLASLRQAAF). Residues 97–116 (PVIAAIGGMIVPALLYLAFN) traverse the membrane as a helical segment. Residues 117–122 (YADPIT) lie on the Periplasmic side of the membrane. A helical transmembrane segment spans residues 123–130 (REGWAIPA). The Cytoplasmic portion of the chain corresponds to 131-154 (ATDIAFALGVLALLGSRVPLALKI). Residues 155–176 (FLMALAIIDDLGAIIIIALFYT) traverse the membrane as a helical segment. The Periplasmic portion of the chain corresponds to 177 to 180 (NDLS). Residues 181–200 (MASLGVAAVAIAVLAVLNLC) traverse the membrane as a helical segment. At 201–204 (GVRR) the chain is on the cytoplasmic side. The chain crosses the membrane as a helical span at residues 205 to 222 (TGVYILVGVVLWTAVLKS). Residue G223 is a topological domain, periplasmic. The chain crosses the membrane as a helical span at residues 224–236 (VHATLAGVIVGFF). Over 237 to 253 (IPLKEKHGRSPAKRLEH) the chain is Cytoplasmic. A helical transmembrane segment spans residues 254 to 272 (VLHPWVAYLILPLFAFANA). Topologically, residues 273-286 (GVSLQGVTLDGLTS) are periplasmic. The helical transmembrane segment at 287–310 (ILPLGIIAGLLIGKPLGISLFCWL) threads the bilayer. The Cytoplasmic segment spans residues 311 to 339 (ALRLKLAHLPEGTTYQQIMAVGILCGIGF). Residues 340–350 (TMSIFIASLAF) form a helical membrane-spanning segment. The Periplasmic segment spans residues 351-357 (GSVDPEL). A helical transmembrane segment spans residues 358–380 (INWAKLGILVGSISSAVIGYSWL). At 381–388 (RVRLRPSV) the chain is on the cytoplasmic side.

Belongs to the NhaA Na(+)/H(+) (TC 2.A.33) antiporter family.

The protein resides in the cell inner membrane. It carries out the reaction Na(+)(in) + 2 H(+)(out) = Na(+)(out) + 2 H(+)(in). Its function is as follows. Na(+)/H(+) antiporter that extrudes sodium in exchange for external protons. The chain is Na(+)/H(+) antiporter NhaA from Shigella boydii serotype 4 (strain Sb227).